Here is a 500-residue protein sequence, read N- to C-terminus: Protein C13 (500 aa).

Residues 27 to 89 (EEIVFIMTVG…IETGIVTIDL (63 aa)) form the BTB domain. Kelch repeat units lie at residues 301 to 348 (ILYL…IFKN), 349 to 395 (RIYV…GTDN), 397 to 440 (LYVV…YHHG), and 441 to 490 (YIYM…IIED).

It belongs to the poxviruses Kelch family.

This is Protein C13 from Swinepox virus (strain Kasza) (SWPV).